The chain runs to 315 residues: Lipoyl synthase (315 aa).

Residues Cys62, Cys67, Cys73, Cys88, Cys92, Cys95, and Ser302 each contribute to the [4Fe-4S] cluster site. Residues Cys73–Ser291 form the Radical SAM core domain.

Belongs to the radical SAM superfamily. Lipoyl synthase family. It depends on [4Fe-4S] cluster as a cofactor.

It localises to the cytoplasm. It carries out the reaction [[Fe-S] cluster scaffold protein carrying a second [4Fe-4S](2+) cluster] + N(6)-octanoyl-L-lysyl-[protein] + 2 oxidized [2Fe-2S]-[ferredoxin] + 2 S-adenosyl-L-methionine + 4 H(+) = [[Fe-S] cluster scaffold protein] + N(6)-[(R)-dihydrolipoyl]-L-lysyl-[protein] + 4 Fe(3+) + 2 hydrogen sulfide + 2 5'-deoxyadenosine + 2 L-methionine + 2 reduced [2Fe-2S]-[ferredoxin]. It participates in protein modification; protein lipoylation via endogenous pathway; protein N(6)-(lipoyl)lysine from octanoyl-[acyl-carrier-protein]: step 2/2. Functionally, catalyzes the radical-mediated insertion of two sulfur atoms into the C-6 and C-8 positions of the octanoyl moiety bound to the lipoyl domains of lipoate-dependent enzymes, thereby converting the octanoylated domains into lipoylated derivatives. The protein is Lipoyl synthase of Coxiella burnetii (strain CbuG_Q212) (Coxiella burnetii (strain Q212)).